The chain runs to 442 residues: MSAAKIWRPSRGLRQAALLLLGRSGVRGLARSHPSRQQQQQFPSLDDKPQFPGASAEFVDKLEFIQPNVISGIPIYRVMDRQGQIINPSEDPHLPQEEVLKFYRSMTLLNTMDRILYESQREGRISFYMTNYGEEGTHVGSAAALERTDLVFGQYREAGVLMYRDYPLELFMSQCYGNVNDPGKGRQMPVHYGCKERHFVTISSPLATQIPQAVGAAYAAKRANANRIVICYFGEGAASEGDAHAGFNFAATLECPIIFFCRNNGYAISTPTSEQYRGDGIAARGPGYGIKSIRVDGNDVFAVYNATKEARRRAVAENQPFLIEAMTYRIGHHSTSDDSSAYRSVDEVNYWDKQDHPISRLRQYLLNQGWWDEEQEKAWRKQSRKKVMEAFEQAERKLKPNPSLLFSDVYQEMPAQLRRQQESLARHLQTYGEHYPLDHFEK.

The N-terminal 42 residues, 1–42, are a transit peptide targeting the mitochondrion; the sequence is MSAAKIWRPSRGLRQAALLLLGRSGVRGLARSHPSRQQQQQF. Residues 30-50 are disordered; it reads ARSHPSRQQQQQFPSLDDKPQ. Residues tyrosine 155 and arginine 156 each contribute to the thiamine diphosphate site. A K(+)-binding site is contributed by serine 203. Residue serine 204 participates in thiamine diphosphate binding. K(+) contacts are provided by proline 205, threonine 208, and glutamine 209. Glutamate 235 provides a ligand contact to Mg(2+). Residues glycine 236, alanine 237, and arginine 262 each coordinate thiamine diphosphate. The Mg(2+) site is built by asparagine 264 and tyrosine 266. Histidine 333 contributes to the thiamine diphosphate binding site. Serine 334 bears the Phosphoserine; by BCKDK mark. Phosphothreonine is present on threonine 335. A phosphoserine mark is found at serine 336 and serine 344. At lysine 353 the chain carries N6-acetyllysine; alternate. Lysine 353 is subject to N6-succinyllysine; alternate. Lysine 377 is modified (N6-succinyllysine).

The protein belongs to the BCKDHA family. Heterotetramer of 2 alpha/BCKDHA and 2 beta chains/BCKDHB that forms the branched-chain alpha-keto acid decarboxylase (E1) component of the BCKD complex. The branched-chain alpha-ketoacid dehydrogenase is a large complex composed of three major building blocks E1, E2 and E3. It is organized around E2, a 24-meric cubic core composed of DBT, to which are associated 6 to 12 copies of E1, and approximately 6 copies of the dehydrogenase E3, a DLD dimer. Interacts with PPM1K. Thiamine diphosphate serves as cofactor. It depends on Mg(2+) as a cofactor. Post-translationally, phosphorylated at Ser-334 by BCKDK and dephosphorylated by protein phosphatase PPM1K.

It is found in the mitochondrion matrix. It catalyses the reaction N(6)-[(R)-lipoyl]-L-lysyl-[protein] + 3-methyl-2-oxobutanoate + H(+) = N(6)-[(R)-S(8)-2-methylpropanoyldihydrolipoyl]-L-lysyl-[protein] + CO2. Its function is as follows. Together with BCKDHB forms the heterotetrameric E1 subunit of the mitochondrial branched-chain alpha-ketoacid dehydrogenase (BCKD) complex. The BCKD complex catalyzes the multi-step oxidative decarboxylation of alpha-ketoacids derived from the branched-chain amino-acids valine, leucine and isoleucine producing CO2 and acyl-CoA which is subsequently utilized to produce energy. The E1 subunit catalyzes the first step with the decarboxylation of the alpha-ketoacid forming an enzyme-product intermediate. A reductive acylation mediated by the lipoylamide cofactor of E2 extracts the acyl group from the E1 active site for the next step of the reaction. The chain is 2-oxoisovalerate dehydrogenase subunit alpha, mitochondrial from Mus musculus (Mouse).